The chain runs to 438 residues: Transposon Ty2-LR1 Gag polyprotein (438 aa).

Composition is skewed to polar residues over residues 1-11, 19-39, and 49-60; these read MESQQLHQNPH, ASVT…SASN, and KVNSQQETTPGT. Disordered regions lie at residues 1-86, 364-397, and 419-438; these read MESQ…GQYQ, KNVS…AKAH, and SSQY…TERI. Residues 295-397 form an RNA-binding region; the sequence is ENNINVSDRL…SSKPRAAKAH (103 aa). Positions 369–381 are enriched in low complexity; sequence TSPNTTNTKVTTR.

Homotrimer.

The protein resides in the cytoplasm. Its function is as follows. Capsid protein (CA) is the structural component of the virus-like particle (VLP), forming the shell that encapsulates the retrotransposons dimeric RNA genome. The particles are assembled from trimer-clustered units and there are holes in the capsid shells that allow for the diffusion of macromolecules. CA also has nucleocapsid-like chaperone activity, promoting primer tRNA(i)-Met annealing to the multipartite primer-binding site (PBS), dimerization of Ty2 RNA and initiation of reverse transcription. The chain is Transposon Ty2-LR1 Gag polyprotein (TY2A-LR1) from Saccharomyces cerevisiae (strain ATCC 204508 / S288c) (Baker's yeast).